Reading from the N-terminus, the 159-residue chain is uncharacterized protein (159 aa).

A run of 3 helical transmembrane segments spans residues Phe-10–Phe-30, Met-52–Leu-72, and Leu-96–Thr-116.

Its subcellular location is the membrane. This is an uncharacterized protein from Escherichia coli (strain K12).